The primary structure comprises 405 residues: MADVNKVVLAYSGGLDTSVILKWLQDTYNCEVVTFTADLGQGEEVEPARAKAQAMGVKEIYIDDLREEFVRDFVFPMFRANTVYEGEYLLGTSIARPLIAKRLIEIANETGADAISHGATGKGNDQVRFELGAYALKPGVKVIAPWREWDLLSREKLMDYAEKHAIPIERHGKKKSPYSMDANLLHISYEGGVLEDTWTEHEEDMWKWTVSPENAPDKPQYLELTYRNGDIVALDGVEMTPATVLATLNRIGGEHGIGRLDIVENRYVGMKSRGCYETPGGTIMLRAHRAIESITLDREVAHLKDELMPKYASLIYTGYWWSPERLMLQQMIDASQAHVNGVVRLKLYKGNVIVTGRKSDDSLFDANIATFEEDGGAYNQADAAGFIKLNALRMRIAANKGRSLF.

Residues 10-18 (AYSGGLDTS) and A37 each bind ATP. L-citrulline-binding residues include Y88 and S93. An ATP-binding site is contributed by G118. L-aspartate contacts are provided by T120, N124, and D125. N124 contributes to the L-citrulline binding site. R128, S179, S188, E264, and Y276 together coordinate L-citrulline.

Belongs to the argininosuccinate synthase family. Type 1 subfamily. In terms of assembly, homotetramer.

It is found in the cytoplasm. The enzyme catalyses L-citrulline + L-aspartate + ATP = 2-(N(omega)-L-arginino)succinate + AMP + diphosphate + H(+). It functions in the pathway amino-acid biosynthesis; L-arginine biosynthesis; L-arginine from L-ornithine and carbamoyl phosphate: step 2/3. This chain is Argininosuccinate synthase, found in Pseudomonas fluorescens (strain SBW25).